The sequence spans 37 residues: Mating pheromone Er-20 (37 aa).

Disulfide bonds link Cys-3–Cys-18, Cys-10–Cys-32, and Cys-15–Cys-24.

In terms of assembly, homodimer.

It is found in the secreted. Functionally, mating ciliate pheromones (or gamones) are diffusible extracellular communication signals that distinguish different intraspecific classes of cells commonly referred to as 'mating types'. They prepare the latter for conjugation by changing their cell surface properties. This chain is Mating pheromone Er-20 (MAT20), found in Euplotes raikovi.